We begin with the raw amino-acid sequence, 701 residues long: Arachidonate 12-lipoxygenase, 12R-type (701 aa).

The PLAT domain occupies 2-119; sequence ATYKVKVATG…TLSLREATGK (118 aa). One can recognise a Lipoxygenase domain in the interval 120-701; it reads TTADDTLPIL…PVLIENSISI (582 aa). 5 residues coordinate Fe cation: H398, H403, H578, N582, and I701.

Belongs to the lipoxygenase family. Fe cation serves as cofactor.

It localises to the cytoplasm. It is found in the perinuclear region. The enzyme catalyses (5Z,8Z,11Z,14Z)-eicosatetraenoate + O2 = (12R)-hydroperoxy-(5Z,8Z,10E,14Z)-eicosatetraenoate. It carries out the reaction N-[omega-(9Z,12Z)-octadecadienoyloxy]acyl-beta-D-glucosyl-(1&lt;-&gt;1)-octadecasphing-4E-enine + O2 = N-[omega-(9R)-hydroperoxy-(10E,12Z)-octadecadienoyloxy]acyl-beta-D-glucosyl-(1&lt;-&gt;1)-octadecasphing-4E-enine. It catalyses the reaction a N-[omega-(9Z,12Z)-octadecadienoyloxy]-acylsphin-4E-enine + O2 = a N-[omega-(9R)-hydroperoxy-(10E,12Z)-octadecadienoyloxy]-acylsphin-4E-enine. The catalysed reaction is (6Z,9Z,12Z)-octadecatrienoate + O2 = 10-hydroperoxy-(6Z,8E,12Z)-octadecatrienoate. The enzyme catalyses (4Z,7Z,10Z,13Z,16Z,19Z)-docosahexaenoate + O2 = 14-hydroperoxy-(4Z,7Z,10Z,12E,16Z,19Z)-docosahexaenoate. It carries out the reaction (8Z,11Z,14Z)-eicosatrienoate + O2 = (8Z,10E,14Z)-12-hydroperoxyeicosatrienoate. It catalyses the reaction (5Z,8Z,11Z,14Z,17Z)-eicosapentaenoate + O2 = (5Z,7Z,8Z,10E,14Z,17Z)-12-hydroperoxyeicosapentaenoate. The catalysed reaction is (6Z,9Z,12Z)-octadecatrienoate + O2 = 10R-hydroperoxy-(6Z,8E,12Z)-octadecatrienoate. The enzyme catalyses 1-O-methyl-(5Z,8Z,11Z,14Z)-eicosatetraenoate + O2 = 1-O-methyl (5Z,8Z,10E,12R,14Z)-hydroperoxyiecosatetraenoate. It carries out the reaction 1-O-methyl-(5Z,8Z,11Z,14Z)-eicosatetraenoate + O2 = 1-O-methyl-8-hydroperoxy-(5Z,9E,11Z,14Z)-eicosatetraenoate. It catalyses the reaction 1-O-methyl-(5Z,8Z,11Z,14Z)-eicosatetraenoate + O2 = 1-O-methyl-(8R)-hydroperoxy-(5Z,9E,11Z,14Z)-eicosatrienoate. The catalysed reaction is 1-O-methyl-(9Z,12Z)-octadecadienoate + O2 = 1-O-methyl-(9R)-hydroperoxy-(10E,12Z)-octadecadienoate. The enzyme catalyses 1-O-methyl-20-hydroxy-(5Z,8Z,11Z,14Z)-eicosatetraenoate + O2 = 1-O-methyl-8-hydroperoxy-20-hydroxy-(5Z,9E,11Z,14Z)-eicosatetraenoate. It carries out the reaction 1-O-methyl-20-hydroxy-(5Z,8Z,11Z,14Z)-eicosatetraenoate + O2 = 1-O-methyl-12-hydroperoxy-20-hydroxy-(5Z,8Z,10E,14Z)-eicosatetraenoate. It catalyses the reaction 1-O-methyl-20-hydroxy-(5Z,8Z,11Z,14Z)-eicosatetraenoate + O2 = 1-O-methyl-9-hydroperoxy-20-hydroxy-(5Z,7E,11Z,14Z)-eicosatetraenoate. The catalysed reaction is 1-O-methyl-(9Z,12Z)-octadecadienoate + O2 = 1-O-methyl-(13S)-hydroperoxy-(9Z,11E)-octadecadienoate. It functions in the pathway lipid metabolism; hydroperoxy eicosatetraenoic acid biosynthesis. The protein operates within lipid metabolism; sphingolipid metabolism. Its activity is regulated as follows. Increased by calcium. Catalyzes the regio and stereo-specific incorporation of a single molecule of dioxygen into free and esterified polyunsaturated fatty acids generating lipid hydroperoxides that can be further reduced to the corresponding hydroxy species. In the skin, acts upstream of ALOXE3 on the lineolate moiety of esterified omega-hydroxyacyl-sphingosine (EOS) ceramides to produce an epoxy-ketone derivative, a crucial step in the conjugation of omega-hydroxyceramide to membrane proteins. Therefore plays a crucial role in the synthesis of corneocytes lipid envelope and the establishment of the skin barrier to water loss. May also play a role in the regulation of the expression of airway mucins. This is Arachidonate 12-lipoxygenase, 12R-type from Rattus norvegicus (Rat).